The sequence spans 1368 residues: DNA-directed RNA polymerase subunit beta (1368 aa).

Belongs to the RNA polymerase beta chain family. In terms of assembly, the RNAP catalytic core consists of 2 alpha, 1 beta, 1 beta' and 1 omega subunit. When a sigma factor is associated with the core the holoenzyme is formed, which can initiate transcription.

It catalyses the reaction RNA(n) + a ribonucleoside 5'-triphosphate = RNA(n+1) + diphosphate. DNA-dependent RNA polymerase catalyzes the transcription of DNA into RNA using the four ribonucleoside triphosphates as substrates. This Paraburkholderia phymatum (strain DSM 17167 / CIP 108236 / LMG 21445 / STM815) (Burkholderia phymatum) protein is DNA-directed RNA polymerase subunit beta.